A 189-amino-acid chain; its full sequence is Peptidyl-tRNA hydrolase (189 aa).

Tyr16 contacts tRNA. The active-site Proton acceptor is the His21. Positions 67, 69, and 115 each coordinate tRNA.

The protein belongs to the PTH family. Monomer.

The protein resides in the cytoplasm. The catalysed reaction is an N-acyl-L-alpha-aminoacyl-tRNA + H2O = an N-acyl-L-amino acid + a tRNA + H(+). Functionally, hydrolyzes ribosome-free peptidyl-tRNAs (with 1 or more amino acids incorporated), which drop off the ribosome during protein synthesis, or as a result of ribosome stalling. Its function is as follows. Catalyzes the release of premature peptidyl moieties from peptidyl-tRNA molecules trapped in stalled 50S ribosomal subunits, and thus maintains levels of free tRNAs and 50S ribosomes. This is Peptidyl-tRNA hydrolase from Legionella pneumophila (strain Paris).